The sequence spans 308 residues: MTGKHVAVLMGGFSSERSVSLSSGVACATTLEECGYRVTRIDVDRNVASILVELKPDVVFNALHGPFGEDGAIQGVLEYLQIPYTHSGVLASALAMDKDRAKKVAAAAGVVVAPSRLMNRFDIGSQHPMKPPYVVKPVREGSSFGVVIVKEDQPHPPQVIGSADWKYGDEVMVEGYIAGRELTCAVMGDRAMDVCEIIPVGYQFYDYDSKYVAGASTHVSPAKILPNIYQKIQTMALTAHRAIGCRGVSRSDFRFDDRFSEEGEVVWLEINTQPGMTPTSLVPDIAKAAGISFAELLSWMVEDASCLR.

The 201-residue stretch at 102–302 (KKVAAAAGVV…FAELLSWMVE (201 aa)) folds into the ATP-grasp domain. 128 to 183 (PMKPPYVVKPVREGSSFGVVIVKEDQPHPPQVIGSADWKYGDEVMVEGYIAGRELT) provides a ligand contact to ATP. Mg(2+) contacts are provided by Asp-252, Glu-269, and Asn-271.

This sequence belongs to the D-alanine--D-alanine ligase family. It depends on Mg(2+) as a cofactor. Requires Mn(2+) as cofactor.

It is found in the cytoplasm. It catalyses the reaction 2 D-alanine + ATP = D-alanyl-D-alanine + ADP + phosphate + H(+). Its pathway is cell wall biogenesis; peptidoglycan biosynthesis. Cell wall formation. The sequence is that of D-alanine--D-alanine ligase B from Brucella suis biovar 1 (strain 1330).